We begin with the raw amino-acid sequence, 101 residues long: Urease subunit beta (101 aa).

This sequence belongs to the urease beta subunit family. As to quaternary structure, heterotrimer of UreA (gamma), UreB (beta) and UreC (alpha) subunits. Three heterotrimers associate to form the active enzyme.

The protein resides in the cytoplasm. It carries out the reaction urea + 2 H2O + H(+) = hydrogencarbonate + 2 NH4(+). The protein operates within nitrogen metabolism; urea degradation; CO(2) and NH(3) from urea (urease route): step 1/1. This chain is Urease subunit beta, found in Pseudomonas aeruginosa (strain LESB58).